A 328-amino-acid chain; its full sequence is Tetraacyldisaccharide 4'-kinase (328 aa).

Position 55–62 (55–62) interacts with ATP; the sequence is TAGGNGKT.

Belongs to the LpxK family.

The enzyme catalyses a lipid A disaccharide + ATP = a lipid IVA + ADP + H(+). It participates in glycolipid biosynthesis; lipid IV(A) biosynthesis; lipid IV(A) from (3R)-3-hydroxytetradecanoyl-[acyl-carrier-protein] and UDP-N-acetyl-alpha-D-glucosamine: step 6/6. Its function is as follows. Transfers the gamma-phosphate of ATP to the 4'-position of a tetraacyldisaccharide 1-phosphate intermediate (termed DS-1-P) to form tetraacyldisaccharide 1,4'-bis-phosphate (lipid IVA). This is Tetraacyldisaccharide 4'-kinase from Escherichia coli O45:K1 (strain S88 / ExPEC).